A 270-amino-acid chain; its full sequence is Secreted RxLR effector protein 149 (270 aa).

Residues 1–21 form the signal peptide; sequence MRNGVVLFGLFFIGYSSCVLA. The RxLR-dEER signature appears at 43–58; that stretch reads RTLQADDPERILAEER.

The protein belongs to the RxLR effector family.

The protein localises to the secreted. It is found in the host nucleus. Its subcellular location is the host cytoplasm. In terms of biological role, secreted effector that completely suppresses the host cell death induced by cell death-inducing proteins. This chain is Secreted RxLR effector protein 149, found in Plasmopara viticola (Downy mildew of grapevine).